The sequence spans 77 residues: U8-lycotoxin-Ls1t (77 aa).

An N-terminal signal peptide occupies residues 1-20 (MKLIIFTGLVPFAIVSLIEA). A propeptide spanning residues 21-26 (QAENEK) is cleaved from the precursor.

This sequence belongs to the neurotoxin 19 (CSTX) family. 08 (U8-Lctx) subfamily. In terms of processing, contains 4 disulfide bonds. Expressed by the venom gland.

The protein localises to the secreted. The polypeptide is U8-lycotoxin-Ls1t (Lycosa singoriensis (Wolf spider)).